Reading from the N-terminus, the 462-residue chain is MEKAIERQRVLLEHLRPSSSSSHNYEASLSASACLAGDSAAYQRTSLYGDDVVIVAAHRTPLCKSKRGNFKDTYPDDLLAPVLRALIEKTNLNPSEVGDIVVGTVLAPGSQRASECRMAAFYAGFPETVAVRTVNRQCSSGLQAVADVAAAIKAGFYDIGIGAGLESMTTNPMAWEGSVNPAVKKFAQAQNCLLPMGVTSENVAQRFGVSRQEQDQAAVDSHRKAAAATAAGKFKDEIIPVKTKLVDPKTGDEKPITVSVDDGIRPTTTLASLGKLKPVFKKDGTTTAGNSSQVSDGAGAVLLMKRSVAMQKGLPVLGVFRTFAAVGVDPAIMGIGPAVAIPAAVKAAGLELDDIDLFEINEAFASQFVYCRNKLGLDPEKINVNGGAMAIGHPLGATGARCVATLLHEMKRRGKDCRFGVVSMCIGTGMGAAAVFERGDGVDELRNARKVEAQGLLSKDAR.

The N-terminal 34 residues, M1–C34, are a transit peptide targeting the peroxisome. The Acyl-thioester intermediate role is filled by C138. An intrachain disulfide couples C138 to C192. Catalysis depends on proton acceptor residues H393 and C425.

The protein belongs to the thiolase-like superfamily. Thiolase family. As to quaternary structure, forms homodimers. Accumulates in etiolated cotyledons and in seedlings, also present in roots, flowers and siliques (at protein level). High levels in wounded leaves.

It is found in the peroxisome. It localises to the glyoxysome. The catalysed reaction is an acyl-CoA + acetyl-CoA = a 3-oxoacyl-CoA + CoA. It participates in lipid metabolism; fatty acid metabolism. Involved in long chain fatty-acid beta-oxidation prior to gluconeogenesis during germination and subsequent seedling growth. Confers sensitivity to 2,4-dichlorophenoxybutiric acid (2,4-DB). Required for local and systemic induction of jasmonic acid (JA) biosynthesis after wounding. Seems to be involved in JA biosynthesis during senescence. May be involved in the positive regulation of abscisic acid-activated signaling pathway. This chain is 3-ketoacyl-CoA thiolase 2, peroxisomal (PED1), found in Arabidopsis thaliana (Mouse-ear cress).